The primary structure comprises 648 residues: Beta-glucuronidase (648 aa).

Positions Gly-1–Ala-19 are cleaved as a signal peptide. Asn-170, Asn-269, and Asn-417 each carry an N-linked (GlcNAc...) asparagine glycan. Glu-448 serves as the catalytic Proton donor. Asn-628 carries an N-linked (GlcNAc...) asparagine glycan.

This sequence belongs to the glycosyl hydrolase 2 family. Homotetramer.

The protein resides in the lysosome. The catalysed reaction is a beta-D-glucuronoside + H2O = D-glucuronate + an alcohol. Inhibited by L-aspartic acid. Plays an important role in the degradation of dermatan and keratan sulfates. The protein is Beta-glucuronidase (GUSB) of Chlorocebus aethiops (Green monkey).